A 273-amino-acid polypeptide reads, in one-letter code: MTNRQWETLREYDEIKYEFYEGIAKVTINRPEVRNAFTPKTVAEMIDAFSRARDDQNVSVIVLTGEGDLAFCSGGDQKKRGHGGYVGEDQIPRLNVLDLQRLIRIIPKPVIAMVKGYAVGGGNVLNVVCDLTIAADNAIFGQTGPKVGSFDAGYGSGYLARIVGHKKAREIWYLCRQYNAQEALDMGLVNTVVPLEKVEDETVQWCKEIMKHSPTALRFLKAAMNADTDGLAGLQQMAGDATLLYYTTDEAKEGRDAFKEKRDPDFDQFPKFP.

Substrate is bound by residues Arg34, 73 to 77 (SGGDQ), Tyr85, 117 to 121 (YAVGG), Thr143, Ser149, Tyr246, and Lys261. Position 142–144 (142–144 (QTG)) interacts with hydrogencarbonate. The segment covering 254-265 (GRDAFKEKRDPD) has biased composition (basic and acidic residues). The interval 254–273 (GRDAFKEKRDPDFDQFPKFP) is disordered.

The protein belongs to the enoyl-CoA hydratase/isomerase family. MenB subfamily. It depends on hydrogencarbonate as a cofactor.

It carries out the reaction 2-succinylbenzoyl-CoA + H(+) = 1,4-dihydroxy-2-naphthoyl-CoA + H2O. It functions in the pathway quinol/quinone metabolism; 1,4-dihydroxy-2-naphthoate biosynthesis; 1,4-dihydroxy-2-naphthoate from chorismate: step 6/7. It participates in quinol/quinone metabolism; menaquinone biosynthesis. Converts o-succinylbenzoyl-CoA (OSB-CoA) to 1,4-dihydroxy-2-naphthoyl-CoA (DHNA-CoA). The protein is 1,4-dihydroxy-2-naphthoyl-CoA synthase of Staphylococcus aureus (strain MRSA252).